Here is a 922-residue protein sequence, read N- to C-terminus: Pertactin autotransporter (922 aa).

The N-terminal stretch at 1 to 34 (MNMSLSRIVKAAPLRRTTLAMALGALGAAPAAYA) is a signal peptide. The Cell attachment site; involved in adhesion to various eukaryotic cell lines motif lies at 260-262 (RGD). 3 tandem repeats follow at residues 266-270 (GGAVP), 271-275 (GGAVP), and 276-280 (GGAVP). The interval 266 to 290 (GGAVPGGAVPGGAVPGGFGPLLDGW) is 4 X 5 AA tandem repeats of G-G-A-V-P. The 4; approximate repeat unit spans residues 281–285 (GGFGP). The disordered stretch occupies residues 561 to 619 (SLVGAKAPPAPKPAPQPGPQPGPQPPQPPQPPQPPQPPQPPQRQPEAPAPQPPAGRELS). Residues 568–613 (PPAPKPAPQPGPQPGPQPPQPPQPPQPPQPPQPPQRQPEAPAPQPP) show a composition bias toward pro residues. Residues 575–603 (PQPGPQPGPQPPQPPQPPQPPQPPQPPQR) form a 9 X 3 AA approximate repeats of P-Q-P region. One can recognise an Autotransporter domain in the interval 654–922 (LNPDAGGAWG…TFHAGYRYSW (269 aa)).

Monomer.

It is found in the periplasm. The protein localises to the secreted. The protein resides in the cell surface. Its subcellular location is the cell outer membrane. Agglutinogen that binds to eukaryotic cells; a process mediated by the R-G-D sequence. Pertactin may have a role in bacterial adhesion, and thus play a role in virulence. May contribute to the disease state of whooping cough. This is Pertactin autotransporter (prn) from Bordetella parapertussis (strain 12822 / ATCC BAA-587 / NCTC 13253).